A 220-amino-acid polypeptide reads, in one-letter code: MRLKHFKTFLFITMAIIVIGTGCANKKKKKDEYNKPAIFWYQGILREILFANLETADNYYSSLQSEHINSPLVPEAMLALGQAHMKKKEYVLASFYFDEYIKRFGTKDNVDYLTFLKLQSHYYAFKNHSKDQEFISNSIVSLGEFIEKYPNSRYRPYVEYMQIKFILGQNELNRAIANVYKKRHKPEGVKRYLERIDETLEKETKPKPSHMPWYVLIFDW.

Positions Met-1–Gly-22 are cleaved as a signal peptide. Cys-23 carries N-palmitoyl cysteine lipidation. Cys-23 carries S-diacylglycerol cysteine lipidation.

The protein belongs to the BamD family. Part of the Bam complex.

The protein localises to the cell outer membrane. In terms of biological role, part of the outer membrane protein assembly complex, which is involved in assembly and insertion of beta-barrel proteins into the outer membrane. The sequence is that of Outer membrane protein assembly factor BamD from Helicobacter pylori (strain ATCC 700392 / 26695) (Campylobacter pylori).